A 217-amino-acid polypeptide reads, in one-letter code: UPF0502 protein VFMJ11_A0613 (217 aa).

Belongs to the UPF0502 family.

This Aliivibrio fischeri (strain MJ11) (Vibrio fischeri) protein is UPF0502 protein VFMJ11_A0613.